The following is a 135-amino-acid chain: Sex-regulated protein janus-A (135 aa).

Position 37 (K37) interacts with substrate. Catalysis depends on H63, which acts as the Proton acceptor. Position 104 to 106 (104 to 106) interacts with substrate; the sequence is SQG.

It belongs to the janus family. In terms of tissue distribution, somatic and germline cells. Isoform B is expressed in both sexes and in somatic and germ line cells. Isoform A is expressed in males and is germ line specific.

Its function is as follows. JanA and janB regulate somatic sex differentiation. In Drosophila melanogaster (Fruit fly), this protein is Sex-regulated protein janus-A (janA).